Here is a 251-residue protein sequence, read N- to C-terminus: Copper transport protein CTR1 (251 aa).

Residues 90 to 110 (AFGIFVLLFFVAFLARMLEFV) form a helical membrane-spanning segment. A compositionally biased stretch (basic and acidic residues) spans 157-173 (DESIDKQNSPQHEETTK). The segment at 157–176 (DESIDKQNSPQHEETTKARG) is disordered. Residues 208–228 (MLAAMTYTLTYFFAVVIGSGV) form a helical membrane-spanning segment.

As to quaternary structure, oligomer.

It is found in the cell membrane. Functionally, required for high affinity copper (probably reduced Cu I) transport into the cell. The sequence is that of Copper transport protein CTR1 (CTR1) from Candida albicans (strain SC5314 / ATCC MYA-2876) (Yeast).